The primary structure comprises 331 residues: MKTSRRGRALLAVALNLLALLFATTAFLTTHWCQGTQRVPKPGCGQGGRANCPNSGANATANGTAAPAAAAAAATASGNGPPGGALYSWETGDDRFLFRNFHTGIWYSCEEELSGLGEKCRSFIDLAPASEKGVLWLSVVSEVLYILLLVVGFSLMCLELFHSSNVIDGLKLNAFAAVFTVLSGLLGMVAHMMYTQVFQVTVSLGPEDWRPHSWDYGWSFCLAWGSFTCCMAASVTTLNSYTKTVIEFRHKRKVFEQGYREEPTFIDPEAIKYFRERMEKRDGSEEDFHLDCRHERYPARHQPHMADSWPRSSAQEAPELNRQCWVLGHWV.

At 1–8 (MKTSRRGR) the chain is on the cytoplasmic side. Residues 9–29 (ALLAVALNLLALLFATTAFLT) traverse the membrane as a helical segment. The Extracellular segment spans residues 30–132 (THWCQGTQRV…FIDLAPASEK (103 aa)). The helical transmembrane segment at 133 to 153 (GVLWLSVVSEVLYILLLVVGF) threads the bilayer. Residues 154 to 173 (SLMCLELFHSSNVIDGLKLN) lie on the Cytoplasmic side of the membrane. The chain crosses the membrane as a helical span at residues 174-194 (AFAAVFTVLSGLLGMVAHMMY). At 195–217 (TQVFQVTVSLGPEDWRPHSWDYG) the chain is on the extracellular side. Residues 218 to 238 (WSFCLAWGSFTCCMAASVTTL) traverse the membrane as a helical segment. The Cytoplasmic portion of the chain corresponds to 239-331 (NSYTKTVIEF…RQCWVLGHWV (93 aa)).

The protein belongs to the GSG1 family. Component of the inner core of AMPAR complex. AMPAR complex consists of an inner core made of 4 pore-forming GluA/GRIA proteins (GRIA1, GRIA2, GRIA3 and GRIA4) and 4 major auxiliary subunits arranged in a twofold symmetry. One of the two pairs of distinct binding sites is occupied either by CNIH2, CNIH3 or CACNG2, CACNG3. The other harbors CACNG2, CACNG3, CACNG4, CACNG8 or GSG1L. This inner core of AMPAR complex is complemented by outer core constituents binding directly to the GluA/GRIA proteins at sites distinct from the interaction sites of the inner core constituents. Outer core constituents include at least PRRT1, PRRT2, CKAMP44/SHISA9, FRRS1L and NRN1. The proteins of the inner and outer core serve as a platform for other, more peripherally associated AMPAR constituents. Alone or in combination, these auxiliary subunits control the gating and pharmacology of the AMPAR complex and profoundly impact their biogenesis and protein processing.

The protein resides in the cell membrane. The protein localises to the synapse. Its function is as follows. As a component of the inner core of AMPAR complex, modifies AMPA receptor (AMPAR) gating. This chain is Germ cell-specific gene 1-like protein (GSG1L), found in Homo sapiens (Human).